The sequence spans 265 residues: MNVSWALLAVVLVLTVATYECRPRGRILGGQDSKAEVRPYMASIQQNGIHQCGGVLIADKWVLSAAHCATNSSNSSLNVMLGAISLSKPEKYKIVVKVLREIPHPLYNSTIKHHDLLLLELSEKVTLSPAVNPLPFQNENIDISAGKRCLVAGWGQMRLTGKKPDTLQELWVPLISRDVCNRRNYYDNEITANMICAGESRKDSCEGDSGGPLVCDGIAVAIVQGGFRKCGNPTKPGIYTLIEPYKSWIMESMYNATLQSNPSPL.

The signal sequence occupies residues 1–21 (MNVSWALLAVVLVLTVATYEC). A glycan (N-linked (GlcNAc...) asparagine) is linked at asparagine 2. The propeptide at 22–26 (RPRGR) is activation peptide. The 228-residue stretch at 27-254 (ILGGQDSKAE…YKSWIMESMY (228 aa)) folds into the Peptidase S1 domain. The cysteines at positions 52 and 68 are disulfide-linked. Histidine 67 functions as the Charge relay system in the catalytic mechanism. N-linked (GlcNAc...) asparagine glycosylation is found at asparagine 71, asparagine 74, and asparagine 108. Aspartate 115 serves as the catalytic Charge relay system. 3 cysteine pairs are disulfide-bonded: cysteine 149-cysteine 215, cysteine 180-cysteine 196, and cysteine 205-cysteine 230. Catalysis depends on serine 209, which acts as the Charge relay system. A glycan (N-linked (GlcNAc...) asparagine) is linked at asparagine 255.

It belongs to the peptidase S1 family.

It is found in the secreted. Its function is as follows. Probable serine protease. This is Serine protease ami from Xenopus tropicalis (Western clawed frog).